The sequence spans 300 residues: Formylmethanofuran--tetrahydromethanopterin formyltransferase-like protein (300 aa).

Belongs to the FTR family.

This chain is Formylmethanofuran--tetrahydromethanopterin formyltransferase-like protein, found in Methanopyrus kandleri (strain AV19 / DSM 6324 / JCM 9639 / NBRC 100938).